The following is a 251-amino-acid chain: Pyridoxine 5'-phosphate synthase (251 aa).

Residue Asn7 coordinates 3-amino-2-oxopropyl phosphate. Residue 9–10 (DH) participates in 1-deoxy-D-xylulose 5-phosphate binding. Arg18 contacts 3-amino-2-oxopropyl phosphate. His43 acts as the Proton acceptor in catalysis. The 1-deoxy-D-xylulose 5-phosphate site is built by Arg45 and His50. Catalysis depends on Glu70, which acts as the Proton acceptor. Thr100 is a binding site for 1-deoxy-D-xylulose 5-phosphate. His198 (proton donor) is an active-site residue. 3-amino-2-oxopropyl phosphate contacts are provided by residues Ala199 and 220–221 (GH).

It belongs to the PNP synthase family. In terms of assembly, homooctamer; tetramer of dimers.

Its subcellular location is the cytoplasm. The enzyme catalyses 3-amino-2-oxopropyl phosphate + 1-deoxy-D-xylulose 5-phosphate = pyridoxine 5'-phosphate + phosphate + 2 H2O + H(+). Its pathway is cofactor biosynthesis; pyridoxine 5'-phosphate biosynthesis; pyridoxine 5'-phosphate from D-erythrose 4-phosphate: step 5/5. Its function is as follows. Catalyzes the complicated ring closure reaction between the two acyclic compounds 1-deoxy-D-xylulose-5-phosphate (DXP) and 3-amino-2-oxopropyl phosphate (1-amino-acetone-3-phosphate or AAP) to form pyridoxine 5'-phosphate (PNP) and inorganic phosphate. The sequence is that of Pyridoxine 5'-phosphate synthase from Aromatoleum aromaticum (strain DSM 19018 / LMG 30748 / EbN1) (Azoarcus sp. (strain EbN1)).